Reading from the N-terminus, the 322-residue chain is MTMPTNQCPWRMQVHHITQETPDVWTISLICHDYYPYRAGQYALVSVRNSAETLRAYTISSTPGVSEYITLTVRRIDDGVGSQWLTRDVKRGDYLWLSDAMGEFTCDDKAEDKFLLLAAGCGVTPIMSMRRWLAKNRPQADVRVIYNVRTPQDVIFADEWRNYPVTLVAENNVTEGFIAGRLTRELLAGVPDLASRTVMTCGPAPYMDWVEQEVKALGVTRFFKEKFFTPVAEAATSGLKFTKLQPAREFYAPVGTTLLEALESNNVPVVAACRAGVCGCCKTKVVSGEYTVSSTMTLTDAEIAEGYVLACSCHPQGDLVLA.

Residues 7–107 (QCPWRMQVHH…SDAMGEFTCD (101 aa)) form the FAD-binding FR-type domain. The segment at 111–213 (EDKFLLLAAG…APYMDWVEQE (103 aa)) is oxidoreductase. The 86-residue stretch at 237–322 (SGLKFTKLQP…CHPQGDLVLA (86 aa)) folds into the 2Fe-2S ferredoxin-type domain. [2Fe-2S] cluster contacts are provided by C273, C278, C281, and C311.

This sequence in the N-terminal section; belongs to the FAD-binding oxidoreductase type 6 family. The cofactor is [2Fe-2S] cluster. FAD serves as cofactor.

In terms of biological role, NADH oxidoreductase acting in concert with HCP. This is NADH oxidoreductase HCR (hcr) from Escherichia coli (strain K12).